The sequence spans 336 residues: Cytoplasmic envelopment protein 2 (336 aa).

Residues 67–69 (KKK) form an interaction with host BBLF1 region.

This sequence belongs to the herpesviridae cytoplasmic envelopment protein 2 family. In terms of assembly, homodimer. Interacts with BBLF1. Interacts with the capsid. Interacts with BKRF4 (via C-terminus); this interaction is important for infectious virion production. Interacts with host TYK2; this interaction participates to the inhibition of host type I IFN signaling. Interacts with host STAT1; this interaction leads to STAT1 dephosphorylation and inhibition. Interacts with host STAT2; this interaction leads to STAT2 degradation. Interacts with host CUL1; this interaction might facilitate CUL1 recruitment to STAT2, leading to ubiquitination and degradation of the latter. Interacts with host AGO2; this interaction participates to the host miRNA regulation leading to enhanced SUMOylation.

It localises to the virion tegument. Its subcellular location is the host cytoplasm. The protein localises to the host nucleus. It is found in the host Golgi apparatus. The protein resides in the host trans-Golgi network. Its function is as follows. Plays a critical role in cytoplasmic virus egress. Participates in the final step of tegumentation and envelope acquisition within the host cytoplasm by directly interacting with the capsid. Upon virion binding to target cell, a signaling cascade is triggered to disrupt the interaction with the capsid, thereby preparing capsid uncoating. Activates the AP-1 pathway and enhances EBV reactivation and virus release. Inhibits type I IFN-induced TYK2, STAT1 and STAT3 phosphorylation, thereby impairing type I IFN signaling and counteracting the ability of IFN-alpha to suppress the reactivation of EBV. Recruits SHP1 phosphatase to dephosphorylate STAT1. Mediates STAT2 ubiquitination and proteasomal degradation. Also suppresses type II and type III IFN signaling. Contributes to G1/S arrest in the host cell. Acts as an miRNA regulator that interferes with the function of RISC in miRNA-mediated mRNA silencing. As a result, SUMOylation is increased. When encapsulated in the exosomes released by EBV-infected host cells, may facilitate the infection in recipient cells. This chain is Cytoplasmic envelopment protein 2, found in Epstein-Barr virus (strain AG876) (HHV-4).